A 453-amino-acid polypeptide reads, in one-letter code: Chromosomal replication initiator protein DnaA (453 aa).

Residues 1–74 (MKEKQFWNRI…GFEIYDAEIT (74 aa)) are domain I, interacts with DnaA modulators. Residues 74–113 (TPHYIFTKPQDTTSSQVEEATNLTLYDYSPKLVSIPYSDT) form a domain II region. The segment at 114–331 (GLKEKYTFDN…GAINDITLIA (218 aa)) is domain III, AAA+ region. 4 residues coordinate ATP: Gly158, Gly160, Lys161, and Thr162. Positions 332–453 (RVKKIKDITI…EIESIKKKIK (122 aa)) are domain IV, binds dsDNA.

Belongs to the DnaA family. In terms of assembly, oligomerizes as a right-handed, spiral filament on DNA at oriC. Interacts (via domains I and III) with CcrZ.

It localises to the cytoplasm. CcrZ stimulates DnaA, possibly by phosphorylation of an intermediate molecule, to initiate DNA replication. In terms of biological role, plays an essential role in the initiation and regulation of chromosomal replication. ATP-DnaA binds to the origin of replication (oriC) to initiate formation of the DNA replication initiation complex once per cell cycle. Binds the DnaA box (a 9 base pair repeat at the origin) and separates the double-stranded (ds)DNA. Forms a right-handed helical filament on oriC DNA; dsDNA binds to the exterior of the filament while single-stranded (ss)DNA is stabiized in the filament's interior. The ATP-DnaA-oriC complex binds and stabilizes one strand of the AT-rich DNA unwinding element (DUE), permitting loading of DNA polymerase. After initiation quickly degrades to an ADP-DnaA complex that is not apt for DNA replication. Binds acidic phospholipids. Its function is as follows. Mutations in this gene suppress a deletion of cell cycle regulator ccrZ. The sequence is that of Chromosomal replication initiator protein DnaA from Streptococcus pneumoniae serotype 2 (strain D39 / NCTC 7466).